We begin with the raw amino-acid sequence, 390 residues long: Dual-specificity RNA methyltransferase RlmN (390 aa).

Glu110 serves as the catalytic Proton acceptor. Positions 116–355 (EADRATLCVS…VIIRKTRGDD (240 aa)) constitute a Radical SAM core domain. A disulfide bridge connects residues Cys123 and Cys360. Residues Cys130, Cys134, and Cys137 each contribute to the [4Fe-4S] cluster site. S-adenosyl-L-methionine contacts are provided by residues 184–185 (GE), Ser216, 238–240 (SLH), and Asn317. The active-site S-methylcysteine intermediate is the Cys360.

This sequence belongs to the radical SAM superfamily. RlmN family. It depends on [4Fe-4S] cluster as a cofactor.

Its subcellular location is the cytoplasm. The enzyme catalyses adenosine(2503) in 23S rRNA + 2 reduced [2Fe-2S]-[ferredoxin] + 2 S-adenosyl-L-methionine = 2-methyladenosine(2503) in 23S rRNA + 5'-deoxyadenosine + L-methionine + 2 oxidized [2Fe-2S]-[ferredoxin] + S-adenosyl-L-homocysteine. It carries out the reaction adenosine(37) in tRNA + 2 reduced [2Fe-2S]-[ferredoxin] + 2 S-adenosyl-L-methionine = 2-methyladenosine(37) in tRNA + 5'-deoxyadenosine + L-methionine + 2 oxidized [2Fe-2S]-[ferredoxin] + S-adenosyl-L-homocysteine. In terms of biological role, specifically methylates position 2 of adenine 2503 in 23S rRNA and position 2 of adenine 37 in tRNAs. m2A2503 modification seems to play a crucial role in the proofreading step occurring at the peptidyl transferase center and thus would serve to optimize ribosomal fidelity. This Haemophilus influenzae (strain ATCC 51907 / DSM 11121 / KW20 / Rd) protein is Dual-specificity RNA methyltransferase RlmN.